Reading from the N-terminus, the 255-residue chain is Putative deoxyribonuclease tatdn3-B (255 aa).

6 residues coordinate Zn(2+): H11, H13, E106, H129, H152, and D199.

It belongs to the metallo-dependent hydrolases superfamily. TatD-type hydrolase family. The cofactor is Mn(2+). Ca(2+) serves as cofactor. Requires Mg(2+) as cofactor. It depends on Zn(2+) as a cofactor.

It localises to the nucleus. The 3'-exonuclease activity is sensitive to the metal ion present in the active site, whereas the AP endodeoxyribonuclease activity is observed in a variety of divalent metal cofactors. 3'-exoxonuclease activity is suppressed in the presence of Ca(2+), Zn(2+) and Ni(2+). Its function is as follows. Exhibits 3'-exonuclease activities and apurinic/apyrimidinic (AP) endonuclease (in vitro). Show preferential AP endonuclease activity on double-stranded DNA substrates and 3'- exonuclease activity on single-stranded DNA. The sequence is that of Putative deoxyribonuclease tatdn3-B (tatdn3-b) from Xenopus laevis (African clawed frog).